Consider the following 348-residue polypeptide: Uroporphyrinogen decarboxylase (348 aa).

Substrate is bound by residues 27 to 31, Phe-46, Asp-76, Tyr-152, Ser-207, and His-320; that span reads RQAGR.

Belongs to the uroporphyrinogen decarboxylase family. As to quaternary structure, homodimer.

The protein resides in the cytoplasm. The catalysed reaction is uroporphyrinogen III + 4 H(+) = coproporphyrinogen III + 4 CO2. It functions in the pathway porphyrin-containing compound metabolism; protoporphyrin-IX biosynthesis; coproporphyrinogen-III from 5-aminolevulinate: step 4/4. Catalyzes the decarboxylation of four acetate groups of uroporphyrinogen-III to yield coproporphyrinogen-III. This chain is Uroporphyrinogen decarboxylase, found in Bacillus cereus (strain G9842).